Consider the following 709-residue polypeptide: MSHTTVADRINELRSLIRRYDYHYYVLDDPIVSDAEYDALMTELRALEAAHPELITPDSPTQRVSGTPASQFAKVQHPQPMLSLGNAFTKADLLAWRDRVLRLLGPDAIVAYVVEPKIDGLAVALTYRDGRLVQGATRGDGEVGEDVTANLRTIGSIPLTLQATSTPQDDDLPTTLPTTIEVRGEVYMRTADFETLNDRLAAAGEKIFANPRNAAAGSLRQKDPTITAARPLRFFAYGVGVVEGISLSSQWQTLRYLRALGFPVNQDVRRFTDFAEVLAYCEAWMAKRDDLPYEADGVVIKIDDFAQQRELGVVGRDPRWAIAFKFPAREAITRLLDITVNVGRTGVVTPNAELEPVQIGGVTVRNASLHNADYIAQRDIRIGDYVIVKRAGDVIPYVVGPVIARRDGSERPWQFPTHCPACGSPLEREEGEAAWRCNNFSICPAQLVRRVEHFVSRSALDIVGMGERQAELFVQRGLIRDVADIFFLKADQLAELEGFGPKRIANLLAAIDAARQRPLDRLLVGLGIRYVGTVAAQTLVAALGSLDAIMAARQEELEQIPGIGPVVAASIVDFFSRPANRALIEKLRAAGVQMGGVSGPTRQSDTLAGKTFVLTGTLPSLSREQASALIVAHGGKVTDSVSKKTSYVVAGANAGSKLAKALQLGIPVIDEAGLLALIGTTAEPPPSPPPPPPETNTDGNQLLLPLDGE.

Residues Asp-34 to Asp-38, Ser-83 to Leu-84, and Glu-115 contribute to the NAD(+) site. Lys-117 (N6-AMP-lysine intermediate) is an active-site residue. NAD(+) contacts are provided by Arg-138, Glu-185, Lys-301, and Lys-325. 4 residues coordinate Zn(2+): Cys-419, Cys-422, Cys-437, and Cys-443. The BRCT domain maps to Arg-602 to Pro-691. A disordered region spans residues Gly-679 to Glu-709. The span at Glu-683–Glu-694 shows a compositional bias: pro residues.

The protein belongs to the NAD-dependent DNA ligase family. LigA subfamily. Mg(2+) is required as a cofactor. The cofactor is Mn(2+).

The catalysed reaction is NAD(+) + (deoxyribonucleotide)n-3'-hydroxyl + 5'-phospho-(deoxyribonucleotide)m = (deoxyribonucleotide)n+m + AMP + beta-nicotinamide D-nucleotide.. Its function is as follows. DNA ligase that catalyzes the formation of phosphodiester linkages between 5'-phosphoryl and 3'-hydroxyl groups in double-stranded DNA using NAD as a coenzyme and as the energy source for the reaction. It is essential for DNA replication and repair of damaged DNA. The protein is DNA ligase of Chloroflexus aurantiacus (strain ATCC 29364 / DSM 637 / Y-400-fl).